The following is an 86-amino-acid chain: Actinorhodin polyketide synthase acyl carrier protein (86 aa).

The Carrier domain maps to Leu-4–Leu-82. Ser-42 is modified (O-(pantetheine 4'-phosphoryl)serine).

Post-translationally, 4'-phosphopantetheine is transferred from CoA to a specific serine of the apo-ACP-like protein.

Its pathway is antibiotic biosynthesis; actinorhodin biosynthesis. Functionally, acyl carrier protein. This Streptomyces coelicolor (strain ATCC BAA-471 / A3(2) / M145) protein is Actinorhodin polyketide synthase acyl carrier protein.